We begin with the raw amino-acid sequence, 557 residues long: Probable protein kinase UbiB (557 aa).

The region spanning 121-509 (AFDTTPLASA…RKLQTRVVTA (389 aa)) is the Protein kinase domain. Residues 127–135 (LASASIAQV) and lysine 154 contribute to the ATP site. The active-site Proton acceptor is the aspartate 289. 2 helical membrane passes run 506-526 (VVTA…YGLH) and 535-555 (VPVW…IAWL).

The protein belongs to the ABC1 family. UbiB subfamily.

It is found in the cell inner membrane. It functions in the pathway cofactor biosynthesis; ubiquinone biosynthesis [regulation]. In terms of biological role, is probably a protein kinase regulator of UbiI activity which is involved in aerobic coenzyme Q (ubiquinone) biosynthesis. The protein is Probable protein kinase UbiB of Xanthomonas campestris pv. campestris (strain 8004).